Consider the following 700-residue polypeptide: AP-2 complex subunit beta (700 aa).

The disordered stretch occupies residues 625–700 (VGNSFPPTGA…RKLSMKRPFS (76 aa)). Serine 649 is subject to Phosphoserine. At threonine 652 the chain carries Phosphothreonine. Positions 653–663 (AMMDDYDKPAE) are enriched in basic and acidic residues. A Phosphoserine modification is found at serine 683.

The protein belongs to the adaptor complexes large subunit family. In terms of assembly, adaptor protein complex 2 (AP-2) is a heterotetramer composed of two large adaptins (alpha-type subunit APL3 and beta-type subunit APL1), a medium chain (mu-type subunit APM4) and a small adaptin (sigma-type subunit APS2). Interacts with APS2.

It localises to the cell membrane. Its subcellular location is the membrane. The protein localises to the coated pit. Functionally, adaptins are components of the adaptor complexes which link clathrin to receptors in coated vesicles. Clathrin-associated protein complexes are believed to interact with the cytoplasmic tails of membrane proteins, leading to their selection and concentration. Beta adaptin is a subunit of the plasma membrane adaptor. The chain is AP-2 complex subunit beta (APL1) from Saccharomyces cerevisiae (strain ATCC 204508 / S288c) (Baker's yeast).